The primary structure comprises 161 residues: UPF0178 protein BOV_1904 (161 aa).

Belongs to the UPF0178 family.

The chain is UPF0178 protein BOV_1904 from Brucella ovis (strain ATCC 25840 / 63/290 / NCTC 10512).